The chain runs to 230 residues: Ureidoacrylate amidohydrolase RutB (230 aa).

Catalysis depends on aspartate 24, which acts as the Proton acceptor. The active site involves lysine 133. The active-site Nucleophile is the cysteine 166.

This sequence belongs to the isochorismatase family. RutB subfamily.

The catalysed reaction is (Z)-3-ureidoacrylate + H2O + H(+) = (Z)-3-aminoacrylate + NH4(+) + CO2. It carries out the reaction (Z)-3-ureidoacrylate + H2O = (Z)-3-aminoacrylate + carbamate + H(+). It catalyses the reaction (Z)-2-methylureidoacrylate + H2O + H(+) = (Z)-2-methylaminoacrylate + NH4(+) + CO2. Hydrolyzes ureidoacrylate to form aminoacrylate and carbamate. The carbamate hydrolyzes spontaneously, thereby releasing one of the nitrogen atoms of the pyrimidine ring as ammonia and one of its carbon atoms as CO2. The sequence is that of Ureidoacrylate amidohydrolase RutB from Escherichia coli O44:H18 (strain 042 / EAEC).